Reading from the N-terminus, the 308-residue chain is Putative T-box protein 30/42 (308 aa).

A DNA-binding region (T-box) is located at residues 11 to 192; that stretch reads MSNEELWKER…KHSTFGNRSE (182 aa). The segment at 186–220 is disordered; it reads TFGNRSEGGIKRKTSDAAGQLPSKRSSKKPVKKDV.

Its subcellular location is the nucleus. In terms of biological role, involved in the regulatory network to control embryonic patterning and morphogenesis. Implicated in negatively regulating vab-7 expression at the anterior of embryos. The chain is Putative T-box protein 30/42 (tbx-30) from Caenorhabditis elegans.